A 187-amino-acid polypeptide reads, in one-letter code: Elongation factor P (187 aa).

The protein belongs to the elongation factor P family.

The protein localises to the cytoplasm. It participates in protein biosynthesis; polypeptide chain elongation. Its function is as follows. Involved in peptide bond synthesis. Stimulates efficient translation and peptide-bond synthesis on native or reconstituted 70S ribosomes in vitro. Probably functions indirectly by altering the affinity of the ribosome for aminoacyl-tRNA, thus increasing their reactivity as acceptors for peptidyl transferase. The protein is Elongation factor P of Chelativorans sp. (strain BNC1).